Consider the following 215-residue polypeptide: Methylosome subunit pICln (215 aa).

2 disordered regions span residues 88-120 (GDPPQQAVNGRNGGGSEAEVDEGNGSDEHDEDD) and 160-215 (HPDS…DADE). 3 stretches are compositionally biased toward acidic residues: residues 105–120 (AEVDEGNGSDEHDEDD), 167–190 (DSEDSDPMQDAGGLEDEAMEEDDA), and 203–215 (LDDDEERFEDADE).

Belongs to the pICln (TC 1.A.47) family. As to quaternary structure, component of the methylosome, a 20S complex containing at least CLNS1A/pICln, PRMT5/SKB1 and WDR77/MEP50; may mediate SNRPD1 and SNRPD3 methylation. Forms a 6S pICln-Sm complex composed of CLNS1A/pICln, SNRPD1, SNRPD2, SNRPE, SNRPF and SNRPG; ring-like structure where CLNS1A/pICln mimics additional Sm proteins and which is unable to assemble into the core snRNP.

It localises to the cytoplasm. The protein localises to the cytosol. Its subcellular location is the nucleus. The protein resides in the cytoskeleton. Involved in both the assembly of spliceosomal snRNPs and the methylation of Sm proteins. Chaperone that regulates the assembly of spliceosomal U1, U2, U4 and U5 small nuclear ribonucleoproteins (snRNPs), the building blocks of the spliceosome, and thereby plays an important role in the splicing of cellular pre-mRNAs. Most spliceosomal snRNPs contain a common set of Sm proteins SNRPB, SNRPD1, SNRPD2, SNRPD3, SNRPE, SNRPF and SNRPG that assemble in a heptameric protein ring on the Sm site of the small nuclear RNA to form the core snRNP (Sm core). In the cytosol, the Sm proteins SNRPD1, SNRPD2, SNRPE, SNRPF and SNRPG are trapped in an inactive 6S pICln-Sm complex by the chaperone CLNS1A that controls the assembly of the core snRNP. Dissociation by the SMN complex of CLNS1A from the trapped Sm proteins and their transfer to an SMN-Sm complex triggers the assembly of core snRNPs and their transport to the nucleus. The polypeptide is Methylosome subunit pICln (icln) (Drosophila melanogaster (Fruit fly)).